Reading from the N-terminus, the 353-residue chain is Guanine nucleotide-binding protein G(q) subunit alpha (353 aa).

Residues cysteine 3 and cysteine 4 are each lipidated (S-palmitoyl cysteine). The G-alpha domain maps to 32 to 353 (RELKLLLLGT…QLNLKEYNLV (322 aa)). Residues 35-48 (KLLLLGTGESGKST) are G1 motif. Residues 40–47 (GTGESGKS), 174–180 (LRVRVPT), 199–203 (DVGGQ), 268–271 (NKKD), and alanine 325 each bind GTP. Mg(2+) contacts are provided by serine 47 and threonine 180. The G2 motif stretch occupies residues 172–180 (DILRVRVPT). The tract at residues 195-204 (FRMVDVGGQR) is G3 motif. Residues 264–271 (ILFLNKKD) form a G4 motif region. The interval 323–328 (TCATDT) is G5 motif.

It belongs to the G-alpha family. G(q) subfamily. As to quaternary structure, g proteins are composed of 3 units; alpha, beta and gamma. The alpha chain contains the guanine nucleotide binding site.

In terms of biological role, guanine nucleotide-binding proteins (G proteins) are involved as modulators or transducers in various transmembrane signaling systems. In Mizuhopecten yessoensis (Japanese scallop), this protein is Guanine nucleotide-binding protein G(q) subunit alpha (SCGQA).